The sequence spans 755 residues: Beta-galactosidase (755 aa).

The Proton donor role is filled by glutamate 382. Glutamate 463 serves as the catalytic Nucleophile.

Belongs to the glycosyl hydrolase 2 family.

The enzyme catalyses Hydrolysis of terminal non-reducing beta-D-galactose residues in beta-D-galactosides.. This chain is Beta-galactosidase (lacZ), found in Rhizobium meliloti (Ensifer meliloti).